The sequence spans 330 residues: Aspartate--ammonia ligase (330 aa).

It belongs to the class-II aminoacyl-tRNA synthetase family. AsnA subfamily.

The protein resides in the cytoplasm. It carries out the reaction L-aspartate + NH4(+) + ATP = L-asparagine + AMP + diphosphate + H(+). Its pathway is amino-acid biosynthesis; L-asparagine biosynthesis; L-asparagine from L-aspartate (ammonia route): step 1/1. The polypeptide is Aspartate--ammonia ligase (Escherichia coli (strain SMS-3-5 / SECEC)).